A 271-amino-acid chain; its full sequence is ATP synthase subunit a (271 aa).

Transmembrane regions (helical) follow at residues F38–L58, L100–L120, D146–I166, L220–P240, and A242–V262.

Belongs to the ATPase A chain family. As to quaternary structure, F-type ATPases have 2 components, CF(1) - the catalytic core - and CF(0) - the membrane proton channel. CF(1) has five subunits: alpha(3), beta(3), gamma(1), delta(1), epsilon(1). CF(0) has three main subunits: a(1), b(2) and c(9-12). The alpha and beta chains form an alternating ring which encloses part of the gamma chain. CF(1) is attached to CF(0) by a central stalk formed by the gamma and epsilon chains, while a peripheral stalk is formed by the delta and b chains.

Its subcellular location is the cell inner membrane. Its function is as follows. Key component of the proton channel; it plays a direct role in the translocation of protons across the membrane. In Citrobacter koseri (strain ATCC BAA-895 / CDC 4225-83 / SGSC4696), this protein is ATP synthase subunit a.